Here is a 74-residue protein sequence, read N- to C-terminus: Putative membrane protein insertion efficiency factor (74 aa).

Belongs to the UPF0161 family.

It localises to the cell inner membrane. Functionally, could be involved in insertion of integral membrane proteins into the membrane. The chain is Putative membrane protein insertion efficiency factor from Syntrophus aciditrophicus (strain SB).